Reading from the N-terminus, the 702-residue chain is Protein sepa-1 (702 aa).

Positions 39–160 (RQRFCYEKTD…KESTSYGQFR (122 aa)) are required for self-association and interaction with pgl-3. 3 short sequence motifs (LIR) span residues 107 to 110 (FVEV), 247 to 250 (FQKI), and 298 to 301 (FGFV). The segment at 450–471 (AKDPEEPTTAASEGGNTYGYQE) is disordered. Positions 458 to 468 (TAASEGGNTYG) are enriched in polar residues. The LIR 4 signature appears at 469–472 (YQEL). Residues 508-543 (AAMDKKKKRRELKSRLNKINAQIDELEKRRMERAGK) are a coiled coil. Residues 545 to 564 (QVVSSSVPSEEAAQVEAPAS) are disordered. The region spanning 597 to 674 (NTSKEWIVED…TVDQILKKTL (78 aa)) is the KIX domain. Positions 675 to 685 (KKDQRATEHNH) are enriched in basic and acidic residues. The interval 675 to 702 (KKDQRATEHNHQQPTQSSDELAKNHEKN) is disordered.

In terms of assembly, self-associates. Interacts (via the LIR motifs) with lgg-1; the interaction is direct. Interacts (via the LIR motifs) with lgg-2; the interaction is direct. Interacts with pgl-3; interaction is enhanced in the presence of RNA. Interacts with epg-2; may be modulated by prmt-1. In terms of processing, degraded by autophagy.

It localises to the nucleus. The protein resides in the cytoplasm. Its subcellular location is the cytoplasmic granule. In terms of biological role, adapter protein that connects P-granules in somatic cells with the autophagic machinery. Association with other adapters such as epg-2 and P-granule components such as pgl-3 is required for the accumulation and degradation of P-granules by autophagy in somatic cells. This ensures exclusive localization of the P-granules in germ cells. The protein is Protein sepa-1 of Caenorhabditis elegans.